A 61-amino-acid chain; its full sequence is Ferredoxin (61 aa).

Residues 2–28 (LYITEECTYCGACEPECPTNAISAGSE) form the 4Fe-4S ferredoxin-type domain. Residues cysteine 8, cysteine 11, cysteine 14, cysteine 18, cysteine 37, cysteine 40, cysteine 49, and cysteine 53 each coordinate [4Fe-4S] cluster.

Requires [4Fe-4S] cluster as cofactor.

Its function is as follows. Ferredoxins are iron-sulfur proteins that transfer electrons in a wide variety of metabolic reactions. The sequence is that of Ferredoxin from Chlorobaculum thiosulfatiphilum (Chlorobium limicola f.sp. thiosulfatophilum).